We begin with the raw amino-acid sequence, 236 residues long: Geranylgeranylglyceryl phosphate synthase (236 aa).

Lys13 is a binding site for sn-glycerol 1-phosphate. Mg(2+) contacts are provided by Asp15 and Thr42. Residues 161–166, Gly191, and 211–212 contribute to the sn-glycerol 1-phosphate site; these read YVEYSG and GD.

The protein belongs to the GGGP/HepGP synthase family. Group I subfamily. It depends on Mg(2+) as a cofactor.

Its subcellular location is the cytoplasm. The catalysed reaction is sn-glycerol 1-phosphate + (2E,6E,10E)-geranylgeranyl diphosphate = sn-3-O-(geranylgeranyl)glycerol 1-phosphate + diphosphate. The protein operates within membrane lipid metabolism; glycerophospholipid metabolism. Its function is as follows. Prenyltransferase that catalyzes the transfer of the geranylgeranyl moiety of geranylgeranyl diphosphate (GGPP) to the C3 hydroxyl of sn-glycerol-1-phosphate (G1P). This reaction is the first ether-bond-formation step in the biosynthesis of archaeal membrane lipids. This chain is Geranylgeranylglyceryl phosphate synthase, found in Halobacterium salinarum (strain ATCC 700922 / JCM 11081 / NRC-1) (Halobacterium halobium).